The primary structure comprises 185 residues: Cuticle protein 18.6, isoform A (185 aa).

7 tandem repeats follow at residues 21-24, 33-36, 41-44, 54-57, 133-136, 139-142, and 150-153. The region spanning 64–134 is the Chitin-binding type R&amp;R domain; that stretch reads HPQYSFAYNV…KEAGAHPAAA (71 aa).

Component of the cuticle of migratory locust which contains more than 100 different structural proteins. The chain is Cuticle protein 18.6, isoform A from Locusta migratoria (Migratory locust).